Consider the following 194-residue polypeptide: Molybdenum cofactor guanylyltransferase (194 aa).

Residues 12-14 (LAG), lysine 25, asparagine 53, aspartate 71, and aspartate 101 each bind GTP. Aspartate 101 contributes to the Mg(2+) binding site.

The protein belongs to the MobA family. In terms of assembly, monomer. Mg(2+) is required as a cofactor.

The protein localises to the cytoplasm. The catalysed reaction is Mo-molybdopterin + GTP + H(+) = Mo-molybdopterin guanine dinucleotide + diphosphate. Transfers a GMP moiety from GTP to Mo-molybdopterin (Mo-MPT) cofactor (Moco or molybdenum cofactor) to form Mo-molybdopterin guanine dinucleotide (Mo-MGD) cofactor. The sequence is that of Molybdenum cofactor guanylyltransferase from Escherichia coli O157:H7.